We begin with the raw amino-acid sequence, 420 residues long: Small ribosomal subunit protein mS75 (420 aa).

The transit peptide at 1–11 (MYNLSRIIYRF) directs the protein to the mitochondrion. Disordered stretches follow at residues 99–120 (RQKN…DVMS) and 390–420 (RYSP…GKQT). A compositionally biased stretch (polar residues) spans 102–114 (NAANPSSDNTPSD). The segment covering 396–409 (QKRRSKRKQKRKER) has biased composition (basic residues).

Component of the mitochondrial ribosome small subunit. In terms of tissue distribution, expressed at high levels in reproductive organs and, at lower levels, ubiquitously.

Its subcellular location is the mitochondrion. In terms of biological role, essential for fertility (male and female gametophyte functions and development). Required for the integrity of female gametic mitochondria. Modulates male gametophyte functions, including pollen tube growth and style penetration. Involved in mitochondrial-driven cell-to-cell communication in embryo sacs during female gametes maturation (including embryogenesis initiation and endosperm development), especially for reciprocal signaling between central and egg cells which regulates reciprocal development. This chain is Small ribosomal subunit protein mS75, found in Arabidopsis thaliana (Mouse-ear cress).